We begin with the raw amino-acid sequence, 87 residues long: Small ribosomal subunit protein uS15 (87 aa).

Basic and acidic residues predominate over residues 1–19 (MDKAKKQELMAKHARHEGD). Residues 1–23 (MDKAKKQELMAKHARHEGDTGSP) are disordered.

This sequence belongs to the universal ribosomal protein uS15 family. Part of the 30S ribosomal subunit. Forms a bridge to the 50S subunit in the 70S ribosome, contacting the 23S rRNA.

Functionally, one of the primary rRNA binding proteins, it binds directly to 16S rRNA where it helps nucleate assembly of the platform of the 30S subunit by binding and bridging several RNA helices of the 16S rRNA. In terms of biological role, forms an intersubunit bridge (bridge B4) with the 23S rRNA of the 50S subunit in the ribosome. The protein is Small ribosomal subunit protein uS15 of Clostridium botulinum (strain Loch Maree / Type A3).